A 384-amino-acid chain; its full sequence is N-acetylneuraminate epimerase (384 aa).

Positions 1 to 24 are cleaved as a signal peptide; the sequence is MMKTKYLLLPLLASSSLLSHMAFA. Kelch repeat units follow at residues 46–90, 92–145, 147–184, 185–230, 233–281, 303–352, and 354–383; these read KVYV…TVVG, NIFV…YSPD, KQVL…KIVD, DYMG…VIDG, ITLI…IAGA, AQFE…SVKG, and VLMV…IDIV. Glu-239 serves as the catalytic Proton acceptor.

The protein belongs to the NanM family. Homodimer.

The protein resides in the periplasm. The enzyme catalyses N-acetyl-alpha-neuraminate = N-acetyl-beta-neuraminate. Converts alpha-N-acetylneuranimic acid (Neu5Ac) to the beta-anomer, accelerating the equilibrium between the alpha- and beta-anomers. Probably facilitates sialidase-negative bacteria to compete successfully for limited amounts of extracellular Neu5Ac, which is likely taken up in the beta-anomer. In addition, the rapid removal of sialic acid from solution might be advantageous to the bacterium to damp down host responses. In Vibrio vulnificus (strain YJ016), this protein is N-acetylneuraminate epimerase.